The chain runs to 369 residues: Aminomethyltransferase (369 aa).

This sequence belongs to the GcvT family. In terms of assembly, the glycine cleavage system is composed of four proteins: P, T, L and H.

It catalyses the reaction N(6)-[(R)-S(8)-aminomethyldihydrolipoyl]-L-lysyl-[protein] + (6S)-5,6,7,8-tetrahydrofolate = N(6)-[(R)-dihydrolipoyl]-L-lysyl-[protein] + (6R)-5,10-methylene-5,6,7,8-tetrahydrofolate + NH4(+). Its function is as follows. The glycine cleavage system catalyzes the degradation of glycine. The protein is Aminomethyltransferase of Xanthomonas campestris pv. campestris (strain 8004).